The chain runs to 156 residues: Small ribosomal subunit protein uS7 (156 aa).

It belongs to the universal ribosomal protein uS7 family. In terms of assembly, part of the 30S ribosomal subunit. Contacts proteins S9 and S11.

Its function is as follows. One of the primary rRNA binding proteins, it binds directly to 16S rRNA where it nucleates assembly of the head domain of the 30S subunit. Is located at the subunit interface close to the decoding center, probably blocks exit of the E-site tRNA. The sequence is that of Small ribosomal subunit protein uS7 from Mycolicibacterium smegmatis (strain ATCC 700084 / mc(2)155) (Mycobacterium smegmatis).